Here is a 611-residue protein sequence, read N- to C-terminus: Zinc metalloproteinase-disintegrin-like MTP9 (611 aa).

The N-terminal stretch at 1–20 (MIEVLLVTICFTVFPYQGSS) is a signal peptide. Residues 21–191 (IILESGNVND…DEPIEKISQL (171 aa)) constitute a propeptide that is removed on maturation. A Peptidase M12B domain is found at 205–401 (KYIELYVVVD…VRPQCILNKP (197 aa)). Residue Glu208 coordinates Ca(2+). Asn282 is a glycosylation site (N-linked (GlcNAc...) asparagine). Asp292 provides a ligand contact to Ca(2+). 3 disulfide bridges follow: Cys316-Cys396, Cys356-Cys380, and Cys358-Cys363. 3 residues coordinate Zn(2+): His341, His345, and His351. Ca(2+)-binding residues include Cys396, Asn399, Asn414, Phe416, Glu418, Glu421, and Asp424. The Disintegrin domain maps to 409-493 (PPVCGNYFVE…ECPTDSFQRN (85 aa)). 15 cysteine pairs are disulfide-bonded: Cys412–Cys441, Cys423–Cys436, Cys425–Cys431, Cys435–Cys456, Cys447–Cys453, Cys452–Cys478, Cys465–Cys485, Cys472–Cys504, Cys497–Cys509, Cys516–Cys566, Cys531–Cys573, Cys541–Cys575, Cys544–Cys554, Cys561–Cys599, and Cys593–Cys604. A D/ECD-tripeptide motif is present at residues 471 to 473 (DCD). Ca(2+) is bound by residues Asp473, Leu474, Glu476, and Asp488. N-linked (GlcNAc...) asparagine glycosylation is found at Asn548 and Asn570.

It belongs to the venom metalloproteinase (M12B) family. P-III subfamily. Monomer. The cofactor is Zn(2+). In terms of tissue distribution, expressed by the venom gland.

The protein resides in the secreted. In terms of biological role, snake venom zinc metalloproteinase that may impair hemostasis in the prey. The protein is Zinc metalloproteinase-disintegrin-like MTP9 of Drysdalia coronoides (White-lipped snake).